The chain runs to 352 residues: N-acetyl-gamma-glutamyl-phosphate reductase (352 aa).

The protein belongs to the NAGSA dehydrogenase family. Type 1 subfamily.

The protein resides in the cytoplasm. The enzyme catalyses N-acetyl-L-glutamate 5-semialdehyde + phosphate + NADP(+) = N-acetyl-L-glutamyl 5-phosphate + NADPH + H(+). The protein operates within amino-acid biosynthesis; L-arginine biosynthesis; N(2)-acetyl-L-ornithine from L-glutamate: step 3/4. Its function is as follows. Catalyzes the NADPH-dependent reduction of N-acetyl-5-glutamyl phosphate to yield N-acetyl-L-glutamate 5-semialdehyde. The protein is N-acetyl-gamma-glutamyl-phosphate reductase of Nostoc ellipsosporum.